Consider the following 344-residue polypeptide: MGCNPPYHLSYRLRLLLLFTLCLTVVGWATSNYFVGAIQVIPKAKDFMASFHKVIHLGNEETLGHDGATKKPELANCPSVSPNLRGQSKLVFKPDLTLEEIEAENPKVSRGRYHPEECKALQRVAILIPHRNREKHLIYLLEHLHPFLQRQQLDYGIYIIHQTGSKKFNRAKLLNVGYLEALKEENWDCFVFHDVDLVPENDFNLYTCGDQPKHLVVGRNSTGYRLRYSKYFGGVTALSREQFLKVNGFSNNYWGWGGEDDDLRLRVELHKMKISRPKPDVGKYTMIFHTRDKGNEVNMGRMKLLQQMSRVWKTDGLSSCSYRLLSVEHNPLYANITVDFWTAA.

The Cytoplasmic portion of the chain corresponds to 1-12 (MGCNPPYHLSYR). A helical; Signal-anchor for type II membrane protein transmembrane segment spans residues 13 to 38 (LRLLLLFTLCLTVVGWATSNYFVGAI). Over 39–344 (QVIPKAKDFM…NITVDFWTAA (306 aa)) the chain is Lumenal. A disulfide bond links Cys-77 and Cys-118. UDP-alpha-D-galactose contacts are provided by residues 129–133 (PHRNR), 168–170 (FNR), and 195–196 (VD). Cys-189 and Cys-208 are disulfide-bonded. Residue Asp-196 coordinates Mn(2+). Asn-220 is a glycosylation site (N-linked (GlcNAc...) asparagine). Residues Tyr-224 and Trp-256 each coordinate UDP-alpha-D-galactose. 258 to 261 (GEDD) serves as a coordination point for N-acetyl-D-glucosamine. His-289 lines the Mn(2+) pocket. Residue 289-291 (HTR) participates in UDP-alpha-D-galactose binding. Arg-301 contributes to the N-acetyl-D-glucosamine binding site. The N-linked (GlcNAc...) asparagine glycan is linked to Asn-335.

It belongs to the glycosyltransferase 7 family. In terms of assembly, interacts with SLC35A2/UGT1. Mn(2+) serves as cofactor.

The protein localises to the golgi apparatus membrane. It is found in the secreted. It catalyses the reaction N-acetyl-D-glucosamine + UDP-alpha-D-galactose = beta-D-galactosyl-(1-&gt;4)-N-acetyl-D-glucosamine + UDP + H(+). It carries out the reaction a beta-D-GlcNAc-(1-&gt;3)-beta-D-Gal-(1-&gt;4)-beta-D-Glc-(1&lt;-&gt;1)-Cer(d18:1(4E)) + UDP-alpha-D-galactose = a neolactoside nLc4Cer(d18:1(4E)) + UDP + H(+). The enzyme catalyses 3-O-{beta-D-galactosyl-(1-&gt;3)-[6-O-sulfo-N-acetyl-beta-D-glucosaminyl-(1-&gt;6)]-N-acetyl-alpha-D-galactosaminyl}-L-seryl-[protein] + UDP-alpha-D-galactose = 3-O-{beta-D-galactosyl-(1-&gt;3)-[beta-D-galactosyl-(1-&gt;4)-6-O-sulfo-N-acetyl-beta-D-glucosaminyl-(1-&gt;6)]-N-acetyl-alpha-D-galactosaminyl}-L-seryl-[protein] + UDP + H(+). The catalysed reaction is 3-O-{beta-D-galactosyl-(1-&gt;3)-[6-O-sulfo-N-acetyl-beta-D-glucosaminyl-(1-&gt;6)]-N-acetyl-alpha-D-galactosaminyl}-L-threonyl-[protein] + UDP-alpha-D-galactose = 3-O-{beta-D-galactosyl-(1-&gt;3)-[beta-D-galactosyl-(1-&gt;4)-6-O-sulfo-N-acetyl-beta-D-glucosaminyl-(1-&gt;6)]-N-acetyl-alpha-D-galactosaminyl}-L-threonyl-[protein] + UDP + H(+). Its pathway is protein modification; protein glycosylation. The protein operates within glycolipid biosynthesis. Functionally, galactose (Gal) transferase involved in the synthesis of terminal N-acetyllactosamine (LacNac) unit present on glycan chains of glycoproteins and glycosphingolipids. Catalyzes the transfer of Gal residue via a beta1-&gt;4 linkage from UDP-Gal to the non-reducing terminal N-acetyl glucosamine 6-O-sulfate (6-O-sulfoGlcNAc) in the linearly growing chain of both N- and O-linked keratan sulfate proteoglycans. Cooperates with B3GNT7 N-acetyl glucosamine transferase and CHST6 and CHST1 sulfotransferases to construct and elongate mono- and disulfated disaccharide units [-&gt;3Galbeta1-&gt;4(6-sulfoGlcNAcbeta)1-&gt;] and [-&gt;3(6-sulfoGalbeta)1-&gt;4(6-sulfoGlcNAcbeta)1-&gt;] within keratan sulfate polymer. Transfers Gal residue via a beta1-&gt;4 linkage to terminal 6-O-sulfoGlcNAc within the LacNac unit of core 2 O-glycans forming 6-sulfo-sialyl-Lewis X (sLex). May contribute to the generation of sLex epitope on mucin-type glycoproteins that serve as ligands for SELL/L-selectin, a major regulator of leukocyte migration. In the biosynthesis pathway of neolacto-series glycosphingolipids, transfers Gal residue via a beta1-&gt;4 linkage to terminal GlcNAc of a lactotriaosylceramide (Lc3Cer) acceptor to form a neolactotetraosylceramide. The chain is Beta-1,4-galactosyltransferase 4 from Mus musculus (Mouse).